Reading from the N-terminus, the 579-residue chain is Probable receptor-like serine/threonine-protein kinase At5g57670 (579 aa).

Thr256 carries the phosphothreonine modification. A Protein kinase domain is found at 267–542 (FHQGNIVGIG…LLTNGNEAEI (276 aa)). ATP is bound by residues 273–281 (VGIGGYSEV) and Lys295. The Proton acceptor role is filled by Asp392. Ser396 carries the post-translational modification Phosphoserine. At Thr432 the chain carries Phosphothreonine.

This sequence belongs to the protein kinase superfamily. Ser/Thr protein kinase family.

It catalyses the reaction L-seryl-[protein] + ATP = O-phospho-L-seryl-[protein] + ADP + H(+). The enzyme catalyses L-threonyl-[protein] + ATP = O-phospho-L-threonyl-[protein] + ADP + H(+). The polypeptide is Probable receptor-like serine/threonine-protein kinase At5g57670 (Arabidopsis thaliana (Mouse-ear cress)).